Reading from the N-terminus, the 1349-residue chain is Nitric oxide synthase (1349 aa).

The tract at residues 23 to 195 is disordered; that stretch reads AQQQQQQQQQ…QPRKMSQDYR (173 aa). Low complexity-rich tracts occupy residues 24–51 and 64–73; these read QQQQ…TQQQ and LNGNGLLSGN. Gly residues predominate over residues 142–159; that stretch reads SGSGSGSGGGGVGVGQGA. Residues 165–189 show a composition bias toward polar residues; it reads GSCTASGKSSRELSPSPKNQQQPRK. Residue Ser250 participates in (6R)-L-erythro-5,6,7,8-tetrahydrobiopterin binding. Cys328 is a heme b binding site. L-arginine-binding residues include Gln391, Trp500, Tyr501, Glu505, and Asn510. Residues Trp591 and Phe604 each coordinate (6R)-L-erythro-5,6,7,8-tetrahydrobiopterin. Tyr619 provides a ligand contact to heme b. The interval 641-661 is calmodulin-binding; sequence PRRKFNFKQIARAVKFTSKLF. The Flavodoxin-like domain maps to 671–868; that stretch reads ATVLYATETG…SFRKWAPEVF (198 aa). 814–845 contributes to the FMN binding site; it reads VFALGSSAYPNFCAFGQYVDNILGELGGERLL. Residues 928–1167 enclose the FAD-binding FR-type domain; it reads AKAKPHNLTR…VRSALGFHLP (240 aa). FAD contacts are provided by residues 957–968 and 1100–1110; these read YEPGDHVGIFPA and LQPRFYSISSS. NADP(+) is bound by residues 1175–1193 and 1273–1287; these read ILIG…WQEF and GHIY…AEHV.

Belongs to the NOS family. Heme b is required as a cofactor. It depends on FAD as a cofactor. FMN serves as cofactor.

The enzyme catalyses 2 L-arginine + 3 NADPH + 4 O2 + H(+) = 2 L-citrulline + 2 nitric oxide + 3 NADP(+) + 4 H2O. Stimulated by calcium/calmodulin. Functionally, catalyzes the conversion of L-arginine to L-citrulline producing nitric oxide (NO) which is a messenger molecule with diverse functions throughout the body. Truncated isoforms (isoform 3-isoform 6) are able to form intracellular complexes with the full-length protein and serve as dominant negative inhibitors of the enzyme activity. The protein is Nitric oxide synthase (Nos) of Drosophila melanogaster (Fruit fly).